The following is a 176-amino-acid chain: NAD(P)H-quinone oxidoreductase subunit 6, chloroplastic (176 aa).

Transmembrane regions (helical) follow at residues 10–30, 32–52, 61–81, 92–112, and 152–172; these read FLLV…VLLP, PIFS…LYIL, AQLL…VMFM, LWTV…FLLM, and FFLP…GAIS.

This sequence belongs to the complex I subunit 6 family. As to quaternary structure, NDH is composed of at least 16 different subunits, 5 of which are encoded in the nucleus.

The protein localises to the plastid. Its subcellular location is the chloroplast thylakoid membrane. The catalysed reaction is a plastoquinone + NADH + (n+1) H(+)(in) = a plastoquinol + NAD(+) + n H(+)(out). It carries out the reaction a plastoquinone + NADPH + (n+1) H(+)(in) = a plastoquinol + NADP(+) + n H(+)(out). Its function is as follows. NDH shuttles electrons from NAD(P)H:plastoquinone, via FMN and iron-sulfur (Fe-S) centers, to quinones in the photosynthetic chain and possibly in a chloroplast respiratory chain. The immediate electron acceptor for the enzyme in this species is believed to be plastoquinone. Couples the redox reaction to proton translocation, and thus conserves the redox energy in a proton gradient. The polypeptide is NAD(P)H-quinone oxidoreductase subunit 6, chloroplastic (ndhG) (Capsella bursa-pastoris (Shepherd's purse)).